The primary structure comprises 375 residues: Type II restriction enzyme ApaLI (375 aa).

The enzyme catalyses Endonucleolytic cleavage of DNA to give specific double-stranded fragments with terminal 5'-phosphates.. Its function is as follows. A subtype P restriction enzyme that recognizes the double-stranded sequence 5'-GTGCAC-3' and cleaves after G-1. The chain is Type II restriction enzyme ApaLI from Acetobacter pasteurianus (Acetobacter turbidans).